The chain runs to 452 residues: UDP-glycosyltransferase 76D1 (452 aa).

Residues Ser269, 329–331, 346–354, and 368–371 each bind UDP-alpha-D-glucose; these read APQ, HGGWNSCLE, and SGDQ.

It belongs to the UDP-glycosyltransferase family.

Its function is as follows. Possesses low quercetin 7-O-glucosyltransferase activity in vitro. The chain is UDP-glycosyltransferase 76D1 (UGT76D1) from Arabidopsis thaliana (Mouse-ear cress).